The following is a 119-amino-acid chain: Ribosome-binding factor A (119 aa).

Belongs to the RbfA family. As to quaternary structure, monomer. Binds 30S ribosomal subunits, but not 50S ribosomal subunits or 70S ribosomes.

It is found in the cytoplasm. In terms of biological role, one of several proteins that assist in the late maturation steps of the functional core of the 30S ribosomal subunit. Associates with free 30S ribosomal subunits (but not with 30S subunits that are part of 70S ribosomes or polysomes). Required for efficient processing of 16S rRNA. May interact with the 5'-terminal helix region of 16S rRNA. In Chlorobium phaeovibrioides (strain DSM 265 / 1930) (Prosthecochloris vibrioformis (strain DSM 265)), this protein is Ribosome-binding factor A.